Consider the following 131-residue polypeptide: Small ribosomal subunit protein uS11 (131 aa).

Belongs to the universal ribosomal protein uS11 family. Part of the 30S ribosomal subunit. Interacts with proteins S7 and S18. Binds to IF-3.

In terms of biological role, located on the platform of the 30S subunit, it bridges several disparate RNA helices of the 16S rRNA. Forms part of the Shine-Dalgarno cleft in the 70S ribosome. This is Small ribosomal subunit protein uS11 from Buchnera aphidicola subsp. Acyrthosiphon pisum (strain 5A).